A 682-amino-acid chain; its full sequence is Actin-binding LIM protein 3 (682 aa).

At Met1 the chain carries N-acetylmethionine. LIM zinc-binding domains lie at Ile21–Thr80, Thr80–Ser140, Ser149–Ile208, and Ile208–Glu268. A phosphoserine mark is found at Ser277, Ser280, Ser282, Ser286, Ser290, Ser337, Ser372, and Ser373. Disordered regions lie at residues Ser372 to Ala426 and Tyr440 to Ser475. Tyr376 bears the Phosphotyrosine mark. 2 positions are modified to phosphoserine: Ser379 and Ser388. 3 stretches are compositionally biased toward polar residues: residues Pro380 to Arg393, Gly405 to Gln425, and Ser453 to Gln466. Residues Ser492, Ser502, and Ser503 each carry the phosphoserine modification. Thr542 carries the post-translational modification Phosphothreonine. Ser566, Ser575, and Ser606 each carry phosphoserine. An HP domain is found at Met614–Phe682. Residue Arg630 is modified to Omega-N-methylarginine.

Directly interacts with F-actin and ABRA. As to expression, expressed in heart, brain, lung and liver. In the brain, highly expressed in the olfactory bulb. In the hippocampus, expressed selectively in the CA2 and CA3 fields. In the cerebellum, expressed in internal granular cells.

Its subcellular location is the cytoplasm. Its function is as follows. May act as scaffold protein. May stimulate ABRA activity and ABRA-dependent SRF transcriptional activity. In Mus musculus (Mouse), this protein is Actin-binding LIM protein 3 (Ablim3).